A 651-amino-acid chain; its full sequence is L-type lectin-domain containing receptor kinase IX.1 (651 aa).

Positions methionine 1–serine 19 are cleaved as a signal peptide. The tract at residues valine 20–serine 251 is legume-lectin like. The Extracellular portion of the chain corresponds to valine 20 to methionine 269. Residues asparagine 23, asparagine 125, asparagine 129, asparagine 162, asparagine 169, asparagine 174, asparagine 195, and asparagine 211 are each glycosylated (N-linked (GlcNAc...) asparagine). The chain crosses the membrane as a helical span at residues isoleucine 270–valine 290. Residues phenylalanine 291–arginine 651 lie on the Cytoplasmic side of the membrane. One can recognise a Protein kinase domain in the interval phenylalanine 335–leucine 616. ATP contacts are provided by residues leucine 341 to valine 349 and lysine 364. The active-site Proton acceptor is aspartate 459. The disordered stretch occupies residues serine 630–arginine 651.

This sequence in the C-terminal section; belongs to the protein kinase superfamily. Ser/Thr protein kinase family. The protein in the N-terminal section; belongs to the leguminous lectin family. Interacts with ABCG40.

The protein localises to the cell membrane. It carries out the reaction L-seryl-[protein] + ATP = O-phospho-L-seryl-[protein] + ADP + H(+). It catalyses the reaction L-threonyl-[protein] + ATP = O-phospho-L-threonyl-[protein] + ADP + H(+). Its function is as follows. Promotes hydrogen peroxide H(2)O(2) production and cell death. Functionally, involved in resistance response to the pathogenic oomycetes Phytophthora infestans and Phytophthora capsici. The chain is L-type lectin-domain containing receptor kinase IX.1 from Arabidopsis thaliana (Mouse-ear cress).